The sequence spans 180 residues: Telokin-like protein 20 (180 aa).

Positions 112 to 180 are disordered; that stretch reads SKTDAAVHTS…KQKLDNAKQD (69 aa). A compositionally biased stretch (acidic residues) spans 156-165; it reads DFEENIDDGD.

This Lepidoptera (butterflies and moths) protein is Telokin-like protein 20 (TLP20).